The chain runs to 131 residues: Norrin (131 aa).

A signal peptide spans 1–24 (MRNHVLAASISMLSLLAIMGDTDS). 4 disulfide bridges follow: cysteine 37–cysteine 94, cysteine 53–cysteine 108, cysteine 63–cysteine 124, and cysteine 67–cysteine 126. One can recognise a CTCK domain in the interval 37–130 (CMRHHYVDSI…ILSCHCEECS (94 aa)).

Homodimer; disulfide-linked. Component of a complex, at least composed of TSPAN12, FZD4, LRP5/6 and norrin (NDP). Binds FZD4 with high affinity. Interacts with LRP6 (via Beta-propellers 1 and 2). As to expression, expressed in the outer nuclear, inner nuclear and ganglion cell layers of the retina.

It is found in the secreted. In terms of biological role, activates the canonical Wnt signaling pathway through FZD4 and LRP5 coreceptor. Plays a central role in retinal vascularization by acting as a ligand for FZD4 that signals via stabilizing beta-catenin (CTNNB1) and activating LEF/TCF-mediated transcriptional programs. Acts in concert with TSPAN12 to activate FZD4 independently of the Wnt-dependent activation of FZD4, suggesting the existence of a Wnt-independent signaling that also promote accumulation the beta-catenin (CTNNB1). May be involved in a pathway that regulates neural cell differentiation and proliferation. Possible role in neuroectodermal cell-cell interaction. This Mus musculus (Mouse) protein is Norrin (Ndp).